Here is a 528-residue protein sequence, read N- to C-terminus: Bifunctional dihydrofolate reductase-thymidylate synthase (528 aa).

Positions 1–20 (MASELLANPTNGSGITRPDP) are disordered. The DHFR domain maps to 23–200 (TYQVVVAATQ…IRYCFTTYVR (178 aa)). Valine 27 provides a ligand contact to substrate. Residues alanine 29 and 35–41 (GIGKDGK) contribute to the NADP(+) site. A substrate-binding site is contributed by aspartate 49. Residues 73-75 (RKT) and 94-97 (LTRS) contribute to the NADP(+) site. Substrate contacts are provided by isoleucine 136, tyrosine 142, and threonine 157. 137–144 (GGGQIYRE) lines the NADP(+) pocket. Residues 202 to 528 (RNSVAELTSQ…HQKIEMKMAV (327 aa)) are thymidylate synthase. Arginine 264 is a dUMP binding site. The active site involves cysteine 409. DUMP contacts are provided by residues histidine 410, 428-432 (QRSAD), asparagine 440, and 470-472 (HVY).

The protein in the N-terminal section; belongs to the dihydrofolate reductase family. It in the C-terminal section; belongs to the thymidylate synthase family.

It carries out the reaction (6S)-5,6,7,8-tetrahydrofolate + NADP(+) = 7,8-dihydrofolate + NADPH + H(+). It catalyses the reaction dUMP + (6R)-5,10-methylene-5,6,7,8-tetrahydrofolate = 7,8-dihydrofolate + dTMP. The protein operates within cofactor biosynthesis; tetrahydrofolate biosynthesis; 5,6,7,8-tetrahydrofolate from 7,8-dihydrofolate: step 1/1. Its function is as follows. Bifunctional enzyme. Involved in de novo dTMP biosynthesis. Key enzyme in folate metabolism. Can play two different roles depending on the source of dihydrofolate: de novo synthesis of tetrahydrofolate or recycling of the dihydrofolate released as one of the end products of the TS catalyzed reaction. Catalyzes an essential reaction for de novo glycine and purine synthesis, DNA precursor synthesis, and for the conversion of dUMP to dTMP. The sequence is that of Bifunctional dihydrofolate reductase-thymidylate synthase from Daucus carota (Wild carrot).